Consider the following 330-residue polypeptide: Phenylalanine--tRNA ligase alpha subunit (330 aa).

Mg(2+) is bound at residue Glu-254.

Belongs to the class-II aminoacyl-tRNA synthetase family. Phe-tRNA synthetase alpha subunit type 1 subfamily. Tetramer of two alpha and two beta subunits. Mg(2+) is required as a cofactor.

It localises to the cytoplasm. It catalyses the reaction tRNA(Phe) + L-phenylalanine + ATP = L-phenylalanyl-tRNA(Phe) + AMP + diphosphate + H(+). This chain is Phenylalanine--tRNA ligase alpha subunit (pheS), found in Neisseria meningitidis serogroup B (strain ATCC BAA-335 / MC58).